The sequence spans 727 residues: Zinc metalloproteinase nas-38 (727 aa).

The signal sequence occupies residues 1–25 (MPSPSYNRHIIIASCFCCLLIFSSA). A propeptide spanning residues 26-114 (ARVPKASKKH…FTQGKREKRK (89 aa)) is cleaved from the precursor. Residues 113 to 312 (RKIGRNPLYK…QAINMAYGCT (200 aa)) enclose the Peptidase M12A domain. 2 disulfides stabilise this stretch: Cys158–Cys311 and Cys179–Cys199. His207 contributes to the Zn(2+) binding site. The active site involves Glu208. Residues His211 and His217 each coordinate Zn(2+). One can recognise an EGF-like domain in the interval 306–345 (NMAYGCTESCADLPCLRNGYTHPNNCSMCACPEGLSGRYC). The N-linked (GlcNAc...) asparagine glycan is linked to Asn330. A CUB domain is found at 353 to 469 (AQCGGVIFAT…AGFKAKFWSN (117 aa)). Cystine bridges form between Cys355-Cys383 and Cys411-Cys432. Disordered stretches follow at residues 473–506 (PEGVSTPLPPTTAPLPEISETTQKPEPTTVQSTT) and 532–561 (TPLTSSSTTTESTTVSSTTQSTTWLPTEPS). The segment covering 535-554 (TSSSTTTESTTVSSTTQSTT) has biased composition (low complexity). Residues 610-658 (ECGCGAWSEWQGECSQQCGGCGHRLRKRECKKEACRKEEKRPCNFSACP) form the TSP type-1 domain. 4 disulfide bridges follow: Cys611–Cys644, Cys623–Cys652, Cys627–Cys657, and Cys639–Cys644. Residues Asn653 and Asn714 are each glycosylated (N-linked (GlcNAc...) asparagine).

It depends on Zn(2+) as a cofactor. As to expression, expressed in the epidermis, the excretory canal cell, duct cell, pore cell, and excretory gland cell. Expressed in an oscillating pattern in epithelial cells with increased expression during the lethargus phase which occurs during molting between larval and adult stages. Not expressed in seam cells or in the RIS neuron.

The protein resides in the secreted. Metalloprotease. As part of the innate immune response to molting and injury to the adult epidermis, positively regulates the activity of the transcription factor sta-2 to promote the expression of epidermal antimicrobial peptides such as nlp-29. Through regulating the expression of epidermal antimicrobial peptides such as nlp-29, modulates sleep duration and locomotion quiescence during the sleep-like state called lethargus which occurs during molting between larval and adult stages. This may occur through the sleep-active RIS neuron. The chain is Zinc metalloproteinase nas-38 from Caenorhabditis elegans.